The sequence spans 218 residues: Hypoxanthine-guanine phosphoribosyltransferase (218 aa).

A2 bears the N-acetylalanine mark. Residue K69 participates in GMP binding. K103 carries the post-translational modification N6-acetyllysine. Residue K115 forms a Glycyl lysine isopeptide (Lys-Gly) (interchain with G-Cter in SUMO1); alternate linkage. K115 participates in a covalent cross-link: Glycyl lysine isopeptide (Lys-Gly) (interchain with G-Cter in SUMO2); alternate. Residues 134 to 142, K166, 186 to 188, and D194 each bind GMP; these read EDIIDTGKT and KFV. Catalysis depends on D138, which acts as the Proton acceptor. T142 carries the phosphothreonine modification. Residue D194 coordinates Mg(2+).

The protein belongs to the purine/pyrimidine phosphoribosyltransferase family. As to quaternary structure, homotetramer. Mg(2+) is required as a cofactor.

The protein localises to the cytoplasm. The catalysed reaction is IMP + diphosphate = hypoxanthine + 5-phospho-alpha-D-ribose 1-diphosphate. It carries out the reaction GMP + diphosphate = guanine + 5-phospho-alpha-D-ribose 1-diphosphate. The protein operates within purine metabolism; IMP biosynthesis via salvage pathway; IMP from hypoxanthine: step 1/1. In terms of biological role, converts guanine to guanosine monophosphate, and hypoxanthine to inosine monophosphate. Transfers the 5-phosphoribosyl group from 5-phosphoribosylpyrophosphate onto the purine. Plays a central role in the generation of purine nucleotides through the purine salvage pathway. The chain is Hypoxanthine-guanine phosphoribosyltransferase (HPRT1) from Canis lupus familiaris (Dog).